We begin with the raw amino-acid sequence, 399 residues long: Carbamoyl phosphate synthase small chain (399 aa).

The CPSase stretch occupies residues 1-204; it reads MTKTTLSSDP…WNKGYTINNE (204 aa). Ser-60, Gly-256, and Gly-258 together coordinate L-glutamine. In terms of domain architecture, Glutamine amidotransferase type-1 spans 208–396; sequence HIVAIDYGIK…HDLIVNYREQ (189 aa). The active-site Nucleophile is the Cys-285. Residues Leu-286, Gln-289, Asn-327, Gly-329, and Phe-330 each coordinate L-glutamine. Catalysis depends on residues His-369 and Glu-371.

This sequence belongs to the CarA family. In terms of assembly, composed of two chains; the small (or glutamine) chain promotes the hydrolysis of glutamine to ammonia, which is used by the large (or ammonia) chain to synthesize carbamoyl phosphate. Tetramer of heterodimers (alpha,beta)4.

The catalysed reaction is hydrogencarbonate + L-glutamine + 2 ATP + H2O = carbamoyl phosphate + L-glutamate + 2 ADP + phosphate + 2 H(+). It catalyses the reaction L-glutamine + H2O = L-glutamate + NH4(+). Its pathway is amino-acid biosynthesis; L-arginine biosynthesis; carbamoyl phosphate from bicarbonate: step 1/1. It participates in pyrimidine metabolism; UMP biosynthesis via de novo pathway; (S)-dihydroorotate from bicarbonate: step 1/3. Functionally, small subunit of the glutamine-dependent carbamoyl phosphate synthetase (CPSase). CPSase catalyzes the formation of carbamoyl phosphate from the ammonia moiety of glutamine, carbonate, and phosphate donated by ATP, constituting the first step of 2 biosynthetic pathways, one leading to arginine and/or urea and the other to pyrimidine nucleotides. The small subunit (glutamine amidotransferase) binds and cleaves glutamine to supply the large subunit with the substrate ammonia. The protein is Carbamoyl phosphate synthase small chain of Bartonella bacilliformis (strain ATCC 35685 / KC583 / Herrer 020/F12,63).